Here is a 332-residue protein sequence, read N- to C-terminus: Formamidase (332 aa).

The CN hydrolase domain maps to 14-259; sequence FLTALIQYPV…WEIVTAEVYP (246 aa). The active-site Proton acceptor is Glu-60. Lys-132 functions as the Proton donor in the catalytic mechanism. Cys-165 acts as the Nucleophile in catalysis.

This sequence belongs to the carbon-nitrogen hydrolase superfamily. Aliphatic amidase family.

It carries out the reaction formamide + H2O = formate + NH4(+). Is an aliphatic amidase with a restricted substrate specificity, as it only hydrolyzes formamide. This chain is Formamidase, found in Bacillus thuringiensis (strain Al Hakam).